The following is a 56-amino-acid chain: Large ribosomal subunit protein eL40 (56 aa).

This sequence belongs to the eukaryotic ribosomal protein eL40 family.

The polypeptide is Large ribosomal subunit protein eL40 (Metallosphaera sedula (strain ATCC 51363 / DSM 5348 / JCM 9185 / NBRC 15509 / TH2)).